The sequence spans 308 residues: Protoheme IX farnesyltransferase (308 aa).

8 consecutive transmembrane segments (helical) span residues 31 to 51 (VIEL…RGTV), 53 to 73 (PLLI…ANTL), 102 to 122 (HALI…WLST), 124 to 144 (LLSG…YTML), 149 to 169 (TSQN…IGWS), 170 to 190 (AVTG…FFWT), 242 to 262 (LATG…FLVM), and 288 to 308 (YLAV…PTLL).

This sequence belongs to the UbiA prenyltransferase family. Protoheme IX farnesyltransferase subfamily.

The protein localises to the cell membrane. It carries out the reaction heme b + (2E,6E)-farnesyl diphosphate + H2O = Fe(II)-heme o + diphosphate. It functions in the pathway porphyrin-containing compound metabolism; heme O biosynthesis; heme O from protoheme: step 1/1. In terms of biological role, converts heme B (protoheme IX) to heme O by substitution of the vinyl group on carbon 2 of heme B porphyrin ring with a hydroxyethyl farnesyl side group. This Mycolicibacterium smegmatis (strain ATCC 700084 / mc(2)155) (Mycobacterium smegmatis) protein is Protoheme IX farnesyltransferase.